The chain runs to 140 residues: Actin-depolymerizing factor 10 (140 aa).

Residue Ser-6 is modified to Phosphoserine. Positions 7–139 (GMHVSDECKL…SLDIIKGRVN (133 aa)) constitute an ADF-H domain.

Belongs to the actin-binding proteins ADF family.

It localises to the cytoplasm. Its subcellular location is the cytoskeleton. Functionally, actin-depolymerizing protein. Severs actin filaments (F-actin) and binds to actin monomers. In Arabidopsis thaliana (Mouse-ear cress), this protein is Actin-depolymerizing factor 10 (ADF10).